Here is a 2344-residue protein sequence, read N- to C-terminus: Peroxide stress-activated histidine kinase mak3 (2344 aa).

One can recognise a Protein kinase domain in the interval 1–295 (MYSQHELRNK…GIVNDLEACL (295 aa)). Phosphoserine is present on residues S12, S16, and S17. The segment covering 486-503 (SGNTRKTSLLGSNHSSYS) has biased composition (polar residues). The interval 486 to 506 (SGNTRKTSLLGSNHSSYSDKL) is disordered. TPR repeat units follow at residues 829–862 (CHYLHLAAEEALKIGANQEALDLYNRCIKMIPHE) and 1340–1373 (AFAFETVGSIFVSMELYTSATQYLEEAIRNYAAL). The region spanning 1730-1781 (FELEIRIKRKDGVYRWNLTRCTPTTNEKNRTSFLCATIDIDDQKKARATALE) is the PAC domain. The region spanning 1792–2018 (NISHELRTPF…TFKICYDLKI (227 aa)) is the Histidine kinase domain. At H1795 the chain carries Phosphohistidine; by autocatalysis. A Response regulatory domain is found at 2211–2333 (KILIAEDNPI…TLIKMLLQYL (123 aa)). D2263 carries the post-translational modification 4-aspartylphosphate.

Its subcellular location is the cytoplasm. It catalyses the reaction ATP + protein L-histidine = ADP + protein N-phospho-L-histidine.. Functionally, involved in the control of the SAPK-dependent transcriptional response to peroxide stress. Regulates sty1 activity. The sequence is that of Peroxide stress-activated histidine kinase mak3 (mak3) from Schizosaccharomyces pombe (strain 972 / ATCC 24843) (Fission yeast).